A 259-amino-acid polypeptide reads, in one-letter code: Hydroxyacylglutathione hydrolase (259 aa).

Residues H56, H58, D60, H61, H112, D133, and H171 each contribute to the Zn(2+) site.

Belongs to the metallo-beta-lactamase superfamily. Glyoxalase II family. In terms of assembly, monomer. Zn(2+) serves as cofactor.

The catalysed reaction is an S-(2-hydroxyacyl)glutathione + H2O = a 2-hydroxy carboxylate + glutathione + H(+). It participates in secondary metabolite metabolism; methylglyoxal degradation; (R)-lactate from methylglyoxal: step 2/2. Functionally, thiolesterase that catalyzes the hydrolysis of S-D-lactoyl-glutathione to form glutathione and D-lactic acid. This Pseudomonas entomophila (strain L48) protein is Hydroxyacylglutathione hydrolase.